The chain runs to 349 residues: DNA-directed RNA polymerase subunit Rpo1N (349 aa).

The segment at 306–349 (EDEGEEFAGEQATNLSESADDRMDRDRPSSHGAAPIDVPEVGDD) is disordered. The span at 324–334 (ADDRMDRDRPS) shows a compositional bias: basic and acidic residues.

It belongs to the RNA polymerase beta' chain family. As to quaternary structure, part of the RNA polymerase complex.

The protein localises to the cytoplasm. It carries out the reaction RNA(n) + a ribonucleoside 5'-triphosphate = RNA(n+1) + diphosphate. In terms of biological role, DNA-dependent RNA polymerase (RNAP) catalyzes the transcription of DNA into RNA using the four ribonucleoside triphosphates as substrates. Forms the clamp head domain. This is DNA-directed RNA polymerase subunit Rpo1N from Halococcus morrhuae (Micrococcus morrhuae).